The following is a 1384-amino-acid chain: DNA-directed RNA polymerase subunit beta (1384 aa).

The protein belongs to the RNA polymerase beta chain family. In terms of assembly, the RNAP catalytic core consists of 2 alpha, 1 beta, 1 beta' and 1 omega subunit. When a sigma factor is associated with the core the holoenzyme is formed, which can initiate transcription.

The catalysed reaction is RNA(n) + a ribonucleoside 5'-triphosphate = RNA(n+1) + diphosphate. DNA-dependent RNA polymerase catalyzes the transcription of DNA into RNA using the four ribonucleoside triphosphates as substrates. The polypeptide is DNA-directed RNA polymerase subunit beta (Xylella fastidiosa (strain M23)).